The chain runs to 403 residues: S-adenosylmethionine synthase (403 aa).

Residue His16 coordinates ATP. Residue Asp18 coordinates Mg(2+). Residue Glu44 participates in K(+) binding. 2 residues coordinate L-methionine: Glu57 and Gln100. The tract at residues 100–110 is flexible loop; it reads QSPDIAQGVDR. A disordered region spans residues 106 to 126; that stretch reads QGVDRSYESRSGSASTDAHDL. ATP is bound by residues 176 to 178, 248 to 249, Asp257, 263 to 264, Ala280, and Lys284; these read DGK, KF, and RK. Position 257 (Asp257) interacts with L-methionine. Residue Lys288 participates in L-methionine binding.

Belongs to the AdoMet synthase family. Homotetramer; dimer of dimers. Mg(2+) is required as a cofactor. The cofactor is K(+).

The protein localises to the cytoplasm. The catalysed reaction is L-methionine + ATP + H2O = S-adenosyl-L-methionine + phosphate + diphosphate. The protein operates within amino-acid biosynthesis; S-adenosyl-L-methionine biosynthesis; S-adenosyl-L-methionine from L-methionine: step 1/1. In terms of biological role, catalyzes the formation of S-adenosylmethionine (AdoMet) from methionine and ATP. The overall synthetic reaction is composed of two sequential steps, AdoMet formation and the subsequent tripolyphosphate hydrolysis which occurs prior to release of AdoMet from the enzyme. This chain is S-adenosylmethionine synthase, found in Clavibacter sepedonicus (Clavibacter michiganensis subsp. sepedonicus).